The chain runs to 362 residues: Phosphoserine aminotransferase (362 aa).

Arg42 contacts L-glutamate. Residues 76-77 (AR), Trp102, Thr153, Asp174, and Gln197 each bind pyridoxal 5'-phosphate. An N6-(pyridoxal phosphate)lysine modification is found at Lys198. 239-240 (NT) provides a ligand contact to pyridoxal 5'-phosphate.

Belongs to the class-V pyridoxal-phosphate-dependent aminotransferase family. SerC subfamily. As to quaternary structure, homodimer. Requires pyridoxal 5'-phosphate as cofactor.

The protein localises to the cytoplasm. The catalysed reaction is O-phospho-L-serine + 2-oxoglutarate = 3-phosphooxypyruvate + L-glutamate. It carries out the reaction 4-(phosphooxy)-L-threonine + 2-oxoglutarate = (R)-3-hydroxy-2-oxo-4-phosphooxybutanoate + L-glutamate. It functions in the pathway amino-acid biosynthesis; L-serine biosynthesis; L-serine from 3-phospho-D-glycerate: step 2/3. The protein operates within cofactor biosynthesis; pyridoxine 5'-phosphate biosynthesis; pyridoxine 5'-phosphate from D-erythrose 4-phosphate: step 3/5. Catalyzes the reversible conversion of 3-phosphohydroxypyruvate to phosphoserine and of 3-hydroxy-2-oxo-4-phosphonooxybutanoate to phosphohydroxythreonine. This chain is Phosphoserine aminotransferase, found in Xenorhabdus nematophila (strain ATCC 19061 / DSM 3370 / CCUG 14189 / LMG 1036 / NCIMB 9965 / AN6).